A 660-amino-acid chain; its full sequence is UvrABC system protein B (660 aa).

Residues 26–414 (KKVLAGQRHQ…PEMTEQIIRP (389 aa)) enclose the Helicase ATP-binding domain. Residue 39-46 (GATGTGKT) participates in ATP binding. A Beta-hairpin motif is present at residues 92–115 (YYDYYQPEAYVPSTDTFIEKDASI). Positions 430–596 (QIDNLIEEIR…TIRKEVRDVI (167 aa)) constitute a Helicase C-terminal domain. The UVR domain occupies 624 to 659 (EKVIEQMENEMKQAAKDLDFEKAAELRDVILELKAE).

This sequence belongs to the UvrB family. As to quaternary structure, forms a heterotetramer with UvrA during the search for lesions. Interacts with UvrC in an incision complex.

It is found in the cytoplasm. Its function is as follows. The UvrABC repair system catalyzes the recognition and processing of DNA lesions. A damage recognition complex composed of 2 UvrA and 2 UvrB subunits scans DNA for abnormalities. Upon binding of the UvrA(2)B(2) complex to a putative damaged site, the DNA wraps around one UvrB monomer. DNA wrap is dependent on ATP binding by UvrB and probably causes local melting of the DNA helix, facilitating insertion of UvrB beta-hairpin between the DNA strands. Then UvrB probes one DNA strand for the presence of a lesion. If a lesion is found the UvrA subunits dissociate and the UvrB-DNA preincision complex is formed. This complex is subsequently bound by UvrC and the second UvrB is released. If no lesion is found, the DNA wraps around the other UvrB subunit that will check the other stand for damage. This Oceanobacillus iheyensis (strain DSM 14371 / CIP 107618 / JCM 11309 / KCTC 3954 / HTE831) protein is UvrABC system protein B.